The following is a 109-amino-acid chain: Cell division suppressor protein YneA (109 aa).

The LysM domain maps to 40 to 94 (STVTITKGDTLWELSNKYHNHHHLTTNEFVKWVEDVNDLNSDTAQSLSPGDKLYI).

The protein belongs to the YneA family.

The protein resides in the cytoplasm. In terms of biological role, inhibits cell division during the SOS response. Affects a later stage of the cell division protein assembly, after the assembly of the Z ring, by probably suppressing recruitment of FtsL and/or DivIC to the division machinery. The chain is Cell division suppressor protein YneA from Priestia megaterium (strain DSM 319 / IMG 1521) (Bacillus megaterium).